Here is a 759-residue protein sequence, read N- to C-terminus: Xaa-Pro dipeptidyl-peptidase (759 aa).

Catalysis depends on charge relay system residues serine 347, aspartate 467, and histidine 497.

The protein belongs to the peptidase S15 family. Homodimer.

The protein resides in the secreted. The catalysed reaction is Hydrolyzes Xaa-Pro-|- bonds to release unblocked, N-terminal dipeptides from substrates including Ala-Pro-|-p-nitroanilide and (sequentially) Tyr-Pro-|-Phe-Pro-|-Gly-Pro-|-Ile.. Functionally, removes N-terminal dipeptides sequentially from polypeptides having unsubstituted N-termini provided that the penultimate residue is proline. The chain is Xaa-Pro dipeptidyl-peptidase (pepX) from Streptococcus gordonii.